Here is a 309-residue protein sequence, read N- to C-terminus: UDP-N-acetylenolpyruvoylglucosamine reductase (309 aa).

Residues 34-221 (RVGGPAQVLF…TAAREAAQPI (188 aa)) enclose the FAD-binding PCMH-type domain. Residue Arg-179 is part of the active site. Catalysis depends on Ser-228, which acts as the Proton donor. Glu-298 is a catalytic residue.

This sequence belongs to the MurB family. FAD is required as a cofactor.

The protein localises to the cytoplasm. It catalyses the reaction UDP-N-acetyl-alpha-D-muramate + NADP(+) = UDP-N-acetyl-3-O-(1-carboxyvinyl)-alpha-D-glucosamine + NADPH + H(+). It functions in the pathway cell wall biogenesis; peptidoglycan biosynthesis. In terms of biological role, cell wall formation. The protein is UDP-N-acetylenolpyruvoylglucosamine reductase of Methylorubrum populi (strain ATCC BAA-705 / NCIMB 13946 / BJ001) (Methylobacterium populi).